The following is a 217-amino-acid chain: uncharacterized protein (217 aa).

An N-terminal signal peptide occupies residues 1-24; it reads MRYTVLIALQGALLLLLLIDDGQG.

This is an uncharacterized protein from Aedes vexans (Inland floodwater mosquito).